We begin with the raw amino-acid sequence, 151 residues long: Large ribosomal subunit protein bL9 (151 aa).

This sequence belongs to the bacterial ribosomal protein bL9 family.

In terms of biological role, binds to the 23S rRNA. The protein is Large ribosomal subunit protein bL9 of Thermosipho melanesiensis (strain DSM 12029 / CIP 104789 / BI429).